Consider the following 471-residue polypeptide: Secretogranin-3 (471 aa).

The N-terminal stretch at 1-22 (MGFLWTGSWILVLVLNSGPIQA) is a signal peptide. Disordered regions lie at residues 24 to 73 (PKPE…SNFS), 92 to 145 (KAKQ…HQLD), 208 to 231 (ANNY…KIPE), and 345 to 405 (KLEK…DEAK). A compositionally biased stretch (basic and acidic residues) spans 28–45 (GSQDKSLHNRELSAERPL). At S40 the chain carries Phosphoserine. The O-linked (Xyl...) (chondroitin sulfate) serine glycan is linked to S40. Positions 62–73 (PSESKPSESNFS) are enriched in low complexity. 4 stretches are compositionally biased toward basic and acidic residues: residues 106–142 (LNVD…DGLH), 214–231 (APEK…KIPE), 345–355 (KLEKNTTDSKS), and 363–405 (EKSH…DEAK). Residue S365 is modified to Phosphoserine.

As to quaternary structure, interacts with CHGA. Interacts with secretogranin II/SCG2. Interacts (via C-terminus) with CPE. As to expression, expression restricted to the brain and pituitary gland. Not detected in the adrenal gland.

It is found in the cytoplasmic vesicle. It localises to the secretory vesicle. Its subcellular location is the secretory vesicle membrane. The protein resides in the secreted. Member of the granin protein family that regulates the biogenesis of secretory granules. Acts as a sorting receptor for intragranular proteins including chromogranin A/CHGA. May also play a role in angiogenesis. Promotes endothelial proliferation, migration and tube formation through MEK/ERK signaling pathway. This Rattus norvegicus (Rat) protein is Secretogranin-3 (Scg3).